The following is a 134-amino-acid chain: Large ribosomal subunit protein uL16c (134 aa).

The protein belongs to the universal ribosomal protein uL16 family. Part of the 50S ribosomal subunit.

The protein localises to the plastid. It localises to the chloroplast. The polypeptide is Large ribosomal subunit protein uL16c (Oltmannsiellopsis viridis (Marine flagellate)).